A 29-amino-acid polypeptide reads, in one-letter code: Cycloviolacin-O16 (29 aa).

The segment at residues 1–29 is a cross-link (cyclopeptide (Gly-Asn)); that stretch reads GLPCGETCFTGKCYTPGCSCSYPICKKIN. 3 cysteine pairs are disulfide-bonded: Cys-4/Cys-18, Cys-8/Cys-20, and Cys-13/Cys-25.

In terms of processing, this is a cyclic peptide.

Probably participates in a plant defense mechanism. This chain is Cycloviolacin-O16, found in Viola odorata (Sweet violet).